The following is a 322-amino-acid chain: Deoxyhypusine hydroxylase (322 aa).

HEAT-like PBS-type repeat units follow at residues 76-102 (LKHEVAYVLGQTGNLACAATLREVMLD), 109-135 (VRHEASEALGALGDAASLGALERSRRE), 234-260 (FKHEIAYVFGQIGNPCVVPHLQEVLKR), and 267-293 (VRHEAAEALGSIATDDVLPVLKRHLQD). Fe cation-binding residues include His78, Glu79, His111, Glu112, His236, Glu237, His269, and Glu270.

It belongs to the deoxyhypusine hydroxylase family. Fe(2+) serves as cofactor.

The protein localises to the cytoplasm. It is found in the nucleus. It catalyses the reaction [eIF5A protein]-deoxyhypusine + AH2 + O2 = [eIF5A protein]-hypusine + A + H2O. It participates in protein modification; eIF5A hypusination. In terms of biological role, catalyzes the hydroxylation of the N(6)-(4-aminobutyl)-L-lysine intermediate to form hypusine, an essential post-translational modification only found in mature eIF-5A factor. The protein is Deoxyhypusine hydroxylase of Eremothecium gossypii (strain ATCC 10895 / CBS 109.51 / FGSC 9923 / NRRL Y-1056) (Yeast).